The chain runs to 258 residues: uncharacterized protein (258 aa).

The next 7 membrane-spanning stretches (helical) occupy residues 8-28 (VFLA…IVWF), 38-58 (VFFI…GGVH), 70-90 (EAMQ…GIFE), 121-141 (LEAI…AFAI), 176-196 (LGGI…LLVL), 204-224 (PLFL…AVLY), and 231-251 (HAAA…YWIV).

Its subcellular location is the cell membrane. This is an uncharacterized protein from Bacillus subtilis (strain 168).